We begin with the raw amino-acid sequence, 161 residues long: Large ribosomal subunit protein uL29c (161 aa).

The transit peptide at methionine 1–methionine 61 directs the protein to the chloroplast.

It belongs to the universal ribosomal protein uL29 family. As to quaternary structure, part of the 50S ribosomal subunit.

Its subcellular location is the plastid. It is found in the chloroplast. This chain is Large ribosomal subunit protein uL29c (RPL29), found in Zea mays (Maize).